A 245-amino-acid polypeptide reads, in one-letter code: 1-(5-phosphoribosyl)-5-[(5-phosphoribosylamino)methylideneamino] imidazole-4-carboxamide isomerase (245 aa).

Asp8 serves as the catalytic Proton acceptor. Asp131 functions as the Proton donor in the catalytic mechanism.

This sequence belongs to the HisA/HisF family.

The protein resides in the cytoplasm. It catalyses the reaction 1-(5-phospho-beta-D-ribosyl)-5-[(5-phospho-beta-D-ribosylamino)methylideneamino]imidazole-4-carboxamide = 5-[(5-phospho-1-deoxy-D-ribulos-1-ylimino)methylamino]-1-(5-phospho-beta-D-ribosyl)imidazole-4-carboxamide. It participates in amino-acid biosynthesis; L-histidine biosynthesis; L-histidine from 5-phospho-alpha-D-ribose 1-diphosphate: step 4/9. The sequence is that of 1-(5-phosphoribosyl)-5-[(5-phosphoribosylamino)methylideneamino] imidazole-4-carboxamide isomerase from Neisseria gonorrhoeae (strain ATCC 700825 / FA 1090).